The primary structure comprises 1024 residues: Multidrug resistance protein MdtC (1024 aa).

The next 12 helical transmembrane spans lie at 12 to 32 (VATTLLTLAITLSGIIGFSLL), 333 to 353 (EVERSLVIAVALVILVVFIFL), 360 to 380 (LIPAVAVPVSLIGTFAAMYLC), 387 to 407 (LSLMALTIATGFVVDDAIVVL), 435 to 455 (VLSMSISLVAVFIPLLLMAGL), 469 to 489 (VAIGISLVISLTLTPMMCAWL), 528 to 548 (WVMVVLLSTIALNVWLYISIP), 853 to 873 (LWLIMAAIATVYIVLGILYES), 875 to 895 (VHPLTILSTLPSAGVGALLAL), 897 to 917 (LFDAPFSLIALIGIMLLIGIV), 953 to 973 (PIIMTTLAALFGALPLVLSSG), and 984 to 1004 (ITIVGGLVVSQLLTLYTTPVI).

The protein belongs to the resistance-nodulation-cell division (RND) (TC 2.A.6) family. MdtC subfamily. In terms of assembly, part of a tripartite efflux system composed of MdtA, MdtB and MdtC. MdtC forms a heteromultimer with MdtB.

Its subcellular location is the cell inner membrane. This Yersinia pestis bv. Antiqua (strain Antiqua) protein is Multidrug resistance protein MdtC.